Reading from the N-terminus, the 120-residue chain is Large ribosomal subunit protein bL17 (120 aa).

The protein belongs to the bacterial ribosomal protein bL17 family. Part of the 50S ribosomal subunit. Contacts protein L32.

In Halalkalibacterium halodurans (strain ATCC BAA-125 / DSM 18197 / FERM 7344 / JCM 9153 / C-125) (Bacillus halodurans), this protein is Large ribosomal subunit protein bL17.